The sequence spans 31 residues: Glucagon-5 (31 aa).

Belongs to the glucagon family.

It is found in the secreted. Glucagon plays a key role in glucose metabolism and homeostasis. Regulates blood glucose by increasing gluconeogenesis and decreasing glycolysis. This chain is Glucagon-5, found in Huso dauricus (Kaluga sturgeon).